The chain runs to 266 residues: 4-diphosphocytidyl-2-C-methyl-D-erythritol kinase (266 aa).

Lys-11 is an active-site residue. Position 103 to 113 (103 to 113 (PTFAGLGGGSS)) interacts with ATP. Asp-145 is an active-site residue.

This sequence belongs to the GHMP kinase family. IspE subfamily.

It catalyses the reaction 4-CDP-2-C-methyl-D-erythritol + ATP = 4-CDP-2-C-methyl-D-erythritol 2-phosphate + ADP + H(+). The protein operates within isoprenoid biosynthesis; isopentenyl diphosphate biosynthesis via DXP pathway; isopentenyl diphosphate from 1-deoxy-D-xylulose 5-phosphate: step 3/6. In terms of biological role, catalyzes the phosphorylation of the position 2 hydroxy group of 4-diphosphocytidyl-2C-methyl-D-erythritol. The polypeptide is 4-diphosphocytidyl-2-C-methyl-D-erythritol kinase (Sulfurimonas denitrificans (strain ATCC 33889 / DSM 1251) (Thiomicrospira denitrificans (strain ATCC 33889 / DSM 1251))).